We begin with the raw amino-acid sequence, 214 residues long: Acetoin utilization protein AcuB (214 aa).

CBS domains lie at 7 to 66 and 78 to 135; these read MKRD…ENKR and MKKD…GADQ.

Interacts with YabA.

Its pathway is ketone degradation; acetoin degradation. Functionally, role in growth and sporulation on acetoin or butanediol. Involved in the breakdown of these compounds used as a carbon source. In Bacillus subtilis (strain 168), this protein is Acetoin utilization protein AcuB (acuB).